The sequence spans 95 residues: Histone-like DNA-binding protein (95 aa).

This sequence belongs to the bacterial histone-like protein family.

The chain is Histone-like DNA-binding protein from Rickettsia felis (strain ATCC VR-1525 / URRWXCal2) (Rickettsia azadi).